We begin with the raw amino-acid sequence, 672 residues long: Penicillin-binding protein activator LpoA (672 aa).

The signal sequence occupies residues 1-26 (MLPFHLVRTQAGRVIPVLLAALFLAG). Cysteine 27 carries N-palmitoyl cysteine lipidation. A lipid anchor (S-diacylglycerol cysteine) is attached at cysteine 27. The interval 298–336 (APPTDTAQAGQVTPSSDGQNAQSPAPYSDQAVASTTPAP) is disordered. Positions 305-322 (QAGQVTPSSDGQNAQSPA) are enriched in polar residues. A compositionally biased stretch (low complexity) spans 327 to 336 (QAVASTTPAP).

The protein belongs to the LpoA family. In terms of assembly, interacts with PBP1a.

It is found in the cell outer membrane. Functionally, regulator of peptidoglycan synthesis that is essential for the function of penicillin-binding protein 1A (PBP1a). The protein is Penicillin-binding protein activator LpoA of Pectobacterium parmentieri (strain WPP163) (Pectobacterium wasabiae (strain WPP163)).